The following is a 316-amino-acid chain: Glycerol-3-phosphate dehydrogenase [NAD(P)+] (316 aa).

NADPH contacts are provided by serine 14, phenylalanine 15, arginine 35, and lysine 109. Positions 109 and 137 each coordinate sn-glycerol 3-phosphate. Alanine 141 is a binding site for NADPH. The sn-glycerol 3-phosphate site is built by lysine 192, aspartate 248, serine 258, arginine 259, and asparagine 260. Residue lysine 192 is the Proton acceptor of the active site. Arginine 259 lines the NADPH pocket. The NADPH site is built by leucine 283 and glutamate 285.

This sequence belongs to the NAD-dependent glycerol-3-phosphate dehydrogenase family.

It localises to the cytoplasm. It carries out the reaction sn-glycerol 3-phosphate + NAD(+) = dihydroxyacetone phosphate + NADH + H(+). The enzyme catalyses sn-glycerol 3-phosphate + NADP(+) = dihydroxyacetone phosphate + NADPH + H(+). It functions in the pathway membrane lipid metabolism; glycerophospholipid metabolism. Its function is as follows. Catalyzes the reduction of the glycolytic intermediate dihydroxyacetone phosphate (DHAP) to sn-glycerol 3-phosphate (G3P), the key precursor for phospholipid synthesis. The protein is Glycerol-3-phosphate dehydrogenase [NAD(P)+] of Rickettsia prowazekii (strain Madrid E).